Here is a 298-residue protein sequence, read N- to C-terminus: Glycine--tRNA ligase alpha subunit (298 aa).

It belongs to the class-II aminoacyl-tRNA synthetase family. In terms of assembly, tetramer of two alpha and two beta subunits.

Its subcellular location is the cytoplasm. It carries out the reaction tRNA(Gly) + glycine + ATP = glycyl-tRNA(Gly) + AMP + diphosphate. The protein is Glycine--tRNA ligase alpha subunit of Helicobacter hepaticus (strain ATCC 51449 / 3B1).